Reading from the N-terminus, the 504-residue chain is Malonyl-CoA decarboxylase, mitochondrial (504 aa).

A mitochondrion-targeting transit peptide spans 1-50 (MRGLRRGLSRLGPRLGPWAVPRSLRRVLRAAGPWRGQSSAGSVSERGGAS). The alpha-helical domain stretch occupies residues 51-201 (MEEVLSRSVP…VLKNMLSEWF (151 aa)). The segment at 202–504 (STGFLNLERV…VSQFQQNSKL (303 aa)) is catalytic domain. Serine 340 serves as the catalytic Proton acceptor. Histidine 434 functions as the Proton donor in the catalytic mechanism. The Microbody targeting signal motif lies at 502-504 (SKL).

It localises to the mitochondrion. The protein resides in the cytoplasm. Its subcellular location is the peroxisome. It catalyses the reaction malonyl-CoA + H(+) = acetyl-CoA + CO2. It participates in metabolic intermediate biosynthesis; acetyl-CoA biosynthesis; acetyl-CoA from malonyl-CoA: step 1/1. Functionally, catalyzes the conversion of malonyl-CoA to acetyl-CoA. In the fatty acid biosynthesis MCD selectively removes malonyl-CoA and thus assures that methyl-malonyl-CoA is the only chain elongating substrate for fatty acid synthase and that fatty acids with multiple methyl side chains are produced. This chain is Malonyl-CoA decarboxylase, mitochondrial (MLYCD), found in Anser anser anser (Western greylag goose).